The sequence spans 330 residues: tRNA U34 carboxymethyltransferase (330 aa).

Residues K91, W105, K110, G130, 152–154 (DPS), 181–182 (IE), M196, Y200, and R315 contribute to the carboxy-S-adenosyl-L-methionine site.

Belongs to the class I-like SAM-binding methyltransferase superfamily. CmoB family. Homotetramer.

It carries out the reaction carboxy-S-adenosyl-L-methionine + 5-hydroxyuridine(34) in tRNA = 5-carboxymethoxyuridine(34) in tRNA + S-adenosyl-L-homocysteine + H(+). Catalyzes carboxymethyl transfer from carboxy-S-adenosyl-L-methionine (Cx-SAM) to 5-hydroxyuridine (ho5U) to form 5-carboxymethoxyuridine (cmo5U) at position 34 in tRNAs. The protein is tRNA U34 carboxymethyltransferase of Shewanella loihica (strain ATCC BAA-1088 / PV-4).